The sequence spans 318 residues: tRNA-cytidine(32) 2-sulfurtransferase (318 aa).

The disordered stretch occupies residues 1 to 29 (MNHVSSTKPDTAPSKHLTSSHIDATDQNN). Residues 16–27 (HLTSSHIDATDQ) are compositionally biased toward polar residues. The short motif at 64–69 (SGGKDS) is the PP-loop motif element. [4Fe-4S] cluster is bound by residues Cys-139, Cys-142, and Cys-230.

Belongs to the TtcA family. In terms of assembly, homodimer. Mg(2+) is required as a cofactor. The cofactor is [4Fe-4S] cluster.

It is found in the cytoplasm. It catalyses the reaction cytidine(32) in tRNA + S-sulfanyl-L-cysteinyl-[cysteine desulfurase] + AH2 + ATP = 2-thiocytidine(32) in tRNA + L-cysteinyl-[cysteine desulfurase] + A + AMP + diphosphate + H(+). The protein operates within tRNA modification. Its function is as follows. Catalyzes the ATP-dependent 2-thiolation of cytidine in position 32 of tRNA, to form 2-thiocytidine (s(2)C32). The sulfur atoms are provided by the cysteine/cysteine desulfurase (IscS) system. In Pseudoalteromonas atlantica (strain T6c / ATCC BAA-1087), this protein is tRNA-cytidine(32) 2-sulfurtransferase.